Consider the following 160-residue polypeptide: Phosphopantetheine adenylyltransferase (160 aa).

Ser10 serves as a coordination point for substrate. ATP is bound by residues 10–11 (SF) and His18. Lys42, Thr74, and Arg88 together coordinate substrate. ATP contacts are provided by residues 89-91 (GLR), Glu99, and 124-130 (FYYISSR).

This sequence belongs to the bacterial CoaD family. In terms of assembly, homohexamer. Mg(2+) serves as cofactor.

The protein resides in the cytoplasm. The enzyme catalyses (R)-4'-phosphopantetheine + ATP + H(+) = 3'-dephospho-CoA + diphosphate. It participates in cofactor biosynthesis; coenzyme A biosynthesis; CoA from (R)-pantothenate: step 4/5. Its function is as follows. Reversibly transfers an adenylyl group from ATP to 4'-phosphopantetheine, yielding dephospho-CoA (dPCoA) and pyrophosphate. In Bdellovibrio bacteriovorus (strain ATCC 15356 / DSM 50701 / NCIMB 9529 / HD100), this protein is Phosphopantetheine adenylyltransferase.